We begin with the raw amino-acid sequence, 406 residues long: 4-hydroxy-3-methylbut-2-en-1-yl diphosphate synthase (ferredoxin) (406 aa).

[4Fe-4S] cluster is bound by residues Cys-313, Cys-316, Cys-347, and Glu-354.

Belongs to the IspG family. [4Fe-4S] cluster is required as a cofactor.

It carries out the reaction (2E)-4-hydroxy-3-methylbut-2-enyl diphosphate + 2 oxidized [2Fe-2S]-[ferredoxin] + H2O = 2-C-methyl-D-erythritol 2,4-cyclic diphosphate + 2 reduced [2Fe-2S]-[ferredoxin] + H(+). The protein operates within isoprenoid biosynthesis; isopentenyl diphosphate biosynthesis via DXP pathway; isopentenyl diphosphate from 1-deoxy-D-xylulose 5-phosphate: step 5/6. Converts 2C-methyl-D-erythritol 2,4-cyclodiphosphate (ME-2,4cPP) into 1-hydroxy-2-methyl-2-(E)-butenyl 4-diphosphate. The polypeptide is 4-hydroxy-3-methylbut-2-en-1-yl diphosphate synthase (ferredoxin) (Picosynechococcus sp. (strain ATCC 27264 / PCC 7002 / PR-6) (Agmenellum quadruplicatum)).